A 218-amino-acid chain; its full sequence is Probable transaldolase (218 aa).

K87 functions as the Schiff-base intermediate with substrate in the catalytic mechanism.

This sequence belongs to the transaldolase family. Type 3B subfamily.

The protein localises to the cytoplasm. The catalysed reaction is D-sedoheptulose 7-phosphate + D-glyceraldehyde 3-phosphate = D-erythrose 4-phosphate + beta-D-fructose 6-phosphate. Its pathway is carbohydrate degradation; pentose phosphate pathway; D-glyceraldehyde 3-phosphate and beta-D-fructose 6-phosphate from D-ribose 5-phosphate and D-xylulose 5-phosphate (non-oxidative stage): step 2/3. In terms of biological role, transaldolase is important for the balance of metabolites in the pentose-phosphate pathway. The polypeptide is Probable transaldolase (Bacteroides fragilis (strain ATCC 25285 / DSM 2151 / CCUG 4856 / JCM 11019 / LMG 10263 / NCTC 9343 / Onslow / VPI 2553 / EN-2)).